The sequence spans 602 residues: GTP-binding protein 2 (602 aa).

Residues 16-64 are disordered; that stretch reads GGGPAVGGTLKARGAGSSSGCGGPKGKKKNGRNRGGKANNPPYLPPEAE. Residues 40-50 show a composition bias toward basic residues; sequence KGKKKNGRNRG. The tr-type G domain maps to 170-398; it reads FLDLRVAVLG…LNILPPLTNS (229 aa). GTP-binding positions include 179–186, 260–264, and 316–319; these read GNVDSGKS, DLAGH, and SKID.

Belongs to the TRAFAC class translation factor GTPase superfamily. Classic translation factor GTPase family. GTPBP1 subfamily. Predominantly expressed in thymus, spleen, and testis. Expressed at lower levels in brain, lung, kidney, and ovary.

The chain is GTP-binding protein 2 from Homo sapiens (Human).